Here is a 777-residue protein sequence, read N- to C-terminus: MTSDWDEIKRLAADFQKAQLSTSLQRLSERNCVEVVSLLIEKGLLEVIFTTDGKEYLTQAHLAQEVKDELFVQGGRVNLVDLAKTLNVDFDRVQRVAEQVVQEDPSVKFVLGQLLDVSYFERVAMEVNEKLAQAGEINVADLTMQYDLPADFILSNIVLKYLNKIIMGKQDASNANIFFTQSYVTRSKAKIRGALAAITKPTPVSAILAQCGIPDRLFNMLVNEVATLGSVTSRSPGAQYIPHIYRKTQVDWVQNFYRQNGYLEHDSVAGLGVTDVKNFITNQLPEAKIIHLKKCSVGEKLIDQVVASLEECLSSNTYLDVSTILPSIMTDEDIDQLLSMVLTAAMQKQTLIFGSTILTTKFVDDIIKPCYGIAEEHAKRSVDSGSYQQYMAEKLMKHQDPMDRDSAVGEGKADKREERRKKAAGGKGGGGTQGRETKTKSTKKHVRGQKGNVSDSDDDMPSGGKKGGKDAVIELITTKEIAKVLEAGLEPEGLEDLSKQLAQHYYPQFSKLALAKAHQLYEISLHQSNQNRRQTHASLQDKLNNLYNDIRLYEKGIKLFPADVQPQLVKYLLKSLGTDFSNEICFYVAAECNLNSNGTTLTVEQRNKIVQECSQEYKSALQALNKAVFSSASIDDFLDVAESALQACSMILKKIDKKKDRNLILCHKHGLLEQLANCSDPALVLHLAVLIIFTICTQSMLHASGRHVSSILSFLQPQLSPEQAQTLTSYHDLVLKLLSAEGSSSNVDDITKQLEDLTPTVKSIASSFKKSGVTSAE.

The segment covering 396 to 417 has biased composition (basic and acidic residues); it reads MKHQDPMDRDSAVGEGKADKRE. Residues 396-470 form a disordered region; that stretch reads MKHQDPMDRD…PSGGKKGGKD (75 aa).

It belongs to the UFL1 family.

Functionally, E3 UFM1-protein ligase that mediates ufmylation of target proteins. In Aedes aegypti (Yellowfever mosquito), this protein is E3 UFM1-protein ligase 1 homolog.